The following is a 398-amino-acid chain: MNASSVVQPLLTRGMKAVLVSQFFSAFADNALLFAILAQLKAQFYPDWSQPILQIVFVLAYILLAPFVGQIADRFPKDRVMLFANSFKLLGAFTICLGYDPFLGYALVGVGAASYSPAKYGILVELTDGDRLVKANGLMEASTIIAILTGSVVGGFLSDWNLAIALLVCALMYGIAVVANFFIPRLSAVRRDKGWNLKKMLTDFASACCILWHNKGARFSLIGTSLFWGAGITLRFLLVLWVPVVLGISDNSTPTILNVMVAVGIIIGAGAAARFITLKTVHRCMPAGVLIGVMVVIFAVQHSIWASYVLLIILGIFGGLFIVPLNALLQESGRQTIGVGYAIAVQNLGENIAMLLMLGLYSLVIKIGVPVVTTGIGFGTLLALTITSLWIWNRFQRN.

The next 11 membrane-spanning stretches (helical) occupy residues 17-37 (AVLV…FAIL), 52-72 (ILQI…GQIA), 90-110 (LGAF…LVGV), 137-157 (GLME…GGFL), 163-183 (AIAL…NFFI), 226-246 (LFWG…PVVL), 256-276 (ILNV…ARFI), 285-305 (MPAG…HSIW), 309-329 (VLLI…NALL), 352-372 (IAML…VPVV), and 373-393 (TTGI…WIWN).

This sequence belongs to the major facilitator superfamily. LplT (TC 2.A.1.42) family.

It localises to the cell inner membrane. In terms of biological role, catalyzes the facilitated diffusion of 2-acyl-glycero-3-phosphoethanolamine (2-acyl-GPE) into the cell. The protein is Lysophospholipid transporter LplT of Photorhabdus laumondii subsp. laumondii (strain DSM 15139 / CIP 105565 / TT01) (Photorhabdus luminescens subsp. laumondii).